A 224-amino-acid chain; its full sequence is Ribose-5-phosphate isomerase A (224 aa).

Substrate-binding positions include 33-36 (TGST), 86-89 (DGAD), and 99-102 (KGGG). E108 (proton acceptor) is an active-site residue. A substrate-binding site is contributed by K126.

Belongs to the ribose 5-phosphate isomerase family. As to quaternary structure, homodimer.

It catalyses the reaction aldehydo-D-ribose 5-phosphate = D-ribulose 5-phosphate. The protein operates within carbohydrate degradation; pentose phosphate pathway; D-ribose 5-phosphate from D-ribulose 5-phosphate (non-oxidative stage): step 1/1. Functionally, catalyzes the reversible conversion of ribose-5-phosphate to ribulose 5-phosphate. This Bordetella avium (strain 197N) protein is Ribose-5-phosphate isomerase A.